The primary structure comprises 809 residues: Ferric-pyoverdine BN7/BN8 receptor (809 aa).

The signal sequence occupies residues 1–45 (MNHTARKRQGWQRSVSQKLAGAVVQGIACMGASAPLLLMPAWATA). Residues 166-273 (TPRETPQSLT…PSATINLIRK (108 aa)) form the TBDR plug domain. One can recognise a TBDR beta-barrel domain in the interval 278–809 (EAQASITGEA…NVMTSFKYSF (532 aa)). Residues 792–809 (YGVYGTPRNVMTSFKYSF) carry the TonB C-terminal box motif.

The protein belongs to the TonB-dependent receptor family.

Its subcellular location is the cell outer membrane. Its function is as follows. Specific receptor for the siderophores ferric pyoverdines (pseudobactins) BN8 and BN7, iron chelating molecules that allow the organism to extract iron from the environment, especially under iron-restricted conditions. The sequence is that of Ferric-pyoverdine BN7/BN8 receptor (pupB) from Pseudomonas putida (Arthrobacter siderocapsulatus).